A 708-amino-acid polypeptide reads, in one-letter code: MTSREQLVQQVLQELQDAVESEGLEGLVGAALEAKQVLSSFALPTCREGGASPQVLEVDSVALSLYPEDAPRNMLPLACRGEGSLLFEAASVLLWGDVGFSLELRARTVVEMLLHRHYYLQGMIDSKVMLQAVRYSLCSEESPEMTSLPSATLEAIFDADVKATCFPSSFSNVWHLYALASVLQRNIYSIYPMRNLKIRPYFNRVIRPRRCDHVPATLHIMWAGQPLSSHLFRHQYFAPVVGLEEVEADGAPGPAPAPPALAPLPPPAKTLELLNQEPGLSYSHLCERYSVTKSTFYRWRRQSQEHRQKVAARFSAKHFLQDSFHRGGVVPLQQFLQRFPEISRSTYYAWKQELLGSGTCQALAPKEVQVLGELEQLPEEQMAKGLGCSSLAAASPSMVLMQRAKSYLEHCISLNTLVPYRCFKRRFPGISRSTYYNWRRKALRRNPSFKPAPALSTPGAPQPASVPEEALLPWKGEGGEGAGKATAGGPPAPHEFLPPKVPLSRWQRRLRRAARKQVLSGHLPFCRFRLRYPSLSPSTFWVWKSLARGWPRGLSKFQTQAPALGKGGLREAKEKQEKEAGRDVTAAMAPPAGTPLHVGASPGEDPGKAQGGPSGEGAMAQGRPHSRSLSSRPVAEAAVGGGDGQVLVMDMLATTKFKAQAKLFLQKRFQSKSFPSFKEFSALFPLTARSTYYMWKRALYDGLTLVDG.

2 disordered regions span residues 473 to 499 (PWKG…FLPP) and 561 to 636 (APAL…PVAE). Basic and acidic residues predominate over residues 568–582 (GLREAKEKQEKEAGR).

This sequence belongs to the vertnin family.

The sequence is that of Vertnin (VRTN) from Ailuropoda melanoleuca (Giant panda).